We begin with the raw amino-acid sequence, 412 residues long: Probable cystathionine gamma-synthase 2 (412 aa).

Pyridoxal 5'-phosphate-binding residues include tyrosine 76, arginine 78, glycine 106, methionine 107, tyrosine 131, serine 226, and threonine 228. The residue at position 229 (lysine 229) is an N6-(pyridoxal phosphate)lysine.

It belongs to the trans-sulfuration enzymes family. It depends on pyridoxal 5'-phosphate as a cofactor.

It catalyses the reaction O-phospho-L-homoserine + L-cysteine = L,L-cystathionine + phosphate. The catalysed reaction is O-succinyl-L-homoserine + L-cysteine = L,L-cystathionine + succinate + H(+). It functions in the pathway amino-acid biosynthesis; L-methionine biosynthesis via de novo pathway; L-cystathionine from O-succinyl-L-homoserine: step 1/1. Functionally, catalyzes the first committed step of methionine (Met) biosynthesis. Catalyzes the formation of L-cystathionine from homoserine esters and L-cysteine, via a gamma-replacement reaction. This chain is Probable cystathionine gamma-synthase 2, found in Arabidopsis thaliana (Mouse-ear cress).